The chain runs to 431 residues: tRNA (adenine(37)-N6)-methyltransferase (431 aa).

The region spanning 30–168 (TEPIGYLESC…YIADYDSPQN (139 aa)) is the TsaA-like domain. S-adenosyl-L-methionine is bound by residues 47 to 49 (PRQ), 90 to 91 (HK), Arg117, Leu127, and 148 to 151 (IHGT). Disordered stretches follow at residues 167–189 (QNLE…ATAN) and 201–243 (KAQP…DRER). Over residues 207 to 243 (STKEKPKCREHRTSDENSQKFRDTSEIQHTLPEDRER) the composition is skewed to basic and acidic residues.

Belongs to the tRNA methyltransferase O family.

It catalyses the reaction N(6)-L-threonylcarbamoyladenosine(37) in tRNA + S-adenosyl-L-methionine = N(6)-methyl,N(6)-L-threonylcarbamoyladenosine(37) in tRNA + S-adenosyl-L-homocysteine + H(+). Its function is as follows. S-adenosyl-L-methionine-dependent methyltransferase responsible for the addition of the methyl group in the formation of N6-methyl-N6-threonylcarbamoyladenosine at position 37 (m(6)t(6)A37) of the tRNA anticodon loop of tRNA(Ser)(GCU). The methyl group of m(6)t(6)A37 may improve the efficiency of the tRNA decoding ability. May bind to tRNA. The polypeptide is tRNA (adenine(37)-N6)-methyltransferase (Rattus norvegicus (Rat)).